We begin with the raw amino-acid sequence, 362 residues long: MSTDNTTALPGAADTTTTDVLIVGAGPVGLFAAFQAGVLGLKCELIDVLDRAGGQCTELYPEKPIYDIPAVPGCLAQDLVDRLLEQCAPFAFPMHFNQRAESVAEVLPAQDGVHSRLLVTTDSGKRFDVAAVLVCAGAGAFAPQRVSLPEAPGLEGRHVHYAVRDVSRFAGKRVVVAGGGDSALDWALALRKVAARVTLLHRREGFRAADGSVAEMRAAVEAGEMDFVIGMLGALKTSGEGEHAALMEIEIRSRDGVQTLAADELVALYGLVSEPGPIAQWDMDMRAGRILVDTTTYESSRRGIFAAGDIAYYANKQKLILSGFHEAALALRKAYHYAFPQKSLVHVHTSNNAALKEKLTHA.

Asp-47, Gln-55, Tyr-60, Ala-100, Phe-141, Asp-309, and Ser-350 together coordinate FAD.

The protein belongs to the ferredoxin--NADP reductase type 2 family. Homodimer. It depends on FAD as a cofactor.

The enzyme catalyses 2 reduced [2Fe-2S]-[ferredoxin] + NADP(+) + H(+) = 2 oxidized [2Fe-2S]-[ferredoxin] + NADPH. The sequence is that of Ferredoxin--NADP reductase 1 from Cupriavidus pinatubonensis (strain JMP 134 / LMG 1197) (Cupriavidus necator (strain JMP 134)).